The primary structure comprises 231 residues: Platelet-activating factor acetylhydrolase IB subunit alpha1 (231 aa).

Ser2 bears the N-acetylserine mark. Residue Ser2 is modified to Phosphoserine. Residues Ser47, Asp192, and His195 contribute to the active site.

It belongs to the 'GDSL' lipolytic enzyme family. Platelet-activating factor acetylhydrolase IB beta/gamma subunits subfamily. As to quaternary structure, forms a catalytic dimer which is either homodimer (alpha1/alpha1 homodimer) or heterodimer with PAFAH1B2 (alpha1/alpha2 heterodimer). Component of the cytosolic (PAF-AH (I)) heterotetrameric enzyme, which is composed of PAFAH1B1 (beta), PAFAH1B2 (alpha2) and PAFAH1B3 (alpha1) subunits. The catalytic activity of the enzyme resides in the alpha1 (PAFAH1B3) and alpha2 (PAFAH1B2) subunits, whereas the beta subunit (PAFAH1B1) has regulatory activity. Trimer formation is not essential for the catalytic activity. Interacts with VLDLR; this interaction may modulate the Reelin pathway.

It localises to the cytoplasm. It carries out the reaction a 1-O-alkyl-2-acetyl-sn-glycero-3-phosphocholine + H2O = a 1-O-alkyl-sn-glycero-3-phosphocholine + acetate + H(+). It catalyses the reaction 1-O-hexadecyl-2-acetyl-sn-glycero-3-phosphocholine + H2O = 1-O-hexadecyl-sn-glycero-3-phosphocholine + acetate + H(+). The catalysed reaction is 1-O-hexadecyl-2-acetyl-sn-glycero-3-phosphate + H2O = 1-O-hexadecyl-sn-glycero-3-phosphate + acetate + H(+). With respect to regulation, beta subunit (PAFAH1B1) inhibits the acetylhydrolase activity of the alpha1/alpha1 catalytic homodimer. Alpha1 catalytic subunit of the cytosolic type I platelet-activating factor (PAF) acetylhydrolase (PAF-AH (I)) heterotetrameric enzyme that catalyzes the hydrolyze of the acetyl group at the sn-2 position of PAF and its analogs and modulates the action of PAF. The activity and substrate specificity of PAF-AH (I) are affected by its subunit composition. Both alpha1/alpha1 homodimer (PAFAH1B3/PAFAH1B3 homodimer) and alpha1/alpha2 heterodimer(PAFAH1B3/PAFAH1B2 heterodimer) hydrolyze 1-O-alkyl-2-acetyl-sn-glycero-3-phosphoric acid (AAGPA) more efficiently than PAF, but they have little hydrolytic activity towards 1-O-alkyl-2-acetyl-sn-glycero-3-phosphorylethanolamine (AAGPE). Plays an important role during the development of brain. The chain is Platelet-activating factor acetylhydrolase IB subunit alpha1 from Pongo abelii (Sumatran orangutan).